Here is a 279-residue protein sequence, read N- to C-terminus: Acetylglutamate kinase (279 aa).

Residues glycine 64–glycine 65, arginine 86, and asparagine 177 contribute to the substrate site.

It belongs to the acetylglutamate kinase family. ArgB subfamily.

It is found in the cytoplasm. The catalysed reaction is N-acetyl-L-glutamate + ATP = N-acetyl-L-glutamyl 5-phosphate + ADP. The protein operates within amino-acid biosynthesis; L-arginine biosynthesis; N(2)-acetyl-L-ornithine from L-glutamate: step 2/4. Its function is as follows. Catalyzes the ATP-dependent phosphorylation of N-acetyl-L-glutamate. The sequence is that of Acetylglutamate kinase from Campylobacter jejuni (strain RM1221).